The primary structure comprises 86 residues: Insulin (86 aa).

Disulfide bonds link Cys-7/Cys-72, Cys-19/Cys-85, and Cys-71/Cys-76. A propeptide spans 33–63 (EAEDPQVGEVELGGGPGLGGLQPLALAGPQQ) (c peptide).

Belongs to the insulin family. Heterodimer of a B chain and an A chain linked by two disulfide bonds.

The protein localises to the secreted. Insulin decreases blood glucose concentration. It increases cell permeability to monosaccharides, amino acids and fatty acids. It accelerates glycolysis, the pentose phosphate cycle, and glycogen synthesis in liver. The polypeptide is Insulin (INS) (Equus caballus (Horse)).